A 225-amino-acid polypeptide reads, in one-letter code: Uridylate kinase (225 aa).

9–10 (GS) lines the ATP pocket. A UMP-binding site is contributed by Gly46. Gly47 and Arg51 together coordinate ATP. UMP-binding positions include Asp67 and 115–121 (THPAHTT). The ATP site is built by Thr141, Asn142, Tyr147, and Asp150.

The protein belongs to the UMP kinase family. As to quaternary structure, homohexamer.

The protein localises to the cytoplasm. The enzyme catalyses UMP + ATP = UDP + ADP. It participates in pyrimidine metabolism; CTP biosynthesis via de novo pathway; UDP from UMP (UMPK route): step 1/1. With respect to regulation, inhibited by UTP. Catalyzes the reversible phosphorylation of UMP to UDP. This Methanococcus maripaludis (strain DSM 14266 / JCM 13030 / NBRC 101832 / S2 / LL) protein is Uridylate kinase.